The primary structure comprises 908 residues: Translation initiation factor IF-2 (908 aa).

Disordered regions lie at residues 52-229 (QSHG…AEEA) and 241-316 (AGQY…SAQH). Residues 65–84 (KSKTTSTARVTGSSGKSKSV) show a composition bias toward polar residues. 6 stretches are compositionally biased toward basic and acidic residues: residues 94–108 (FEKPDPEKMAEELAA), 120–138 (AAKDAEDRAATKKKSEERQ), 176–185 (IEVKPKEQPK), 193–229 (PKVETAVERKAREVREKEEARLREIETETRRTQAEEA), 270–280 (SFEKERREIKR), and 294–303 (KNQDEREIKN). Residues 409–578 (TRPPVVTIMG…SLQAELMELE (170 aa)) form the tr-type G domain. Positions 418–425 (GHVDHGKT) are G1. Residue 418-425 (GHVDHGKT) participates in GTP binding. Residues 443–447 (GITQH) are G2. Residues 464 to 467 (DTPG) are G3. GTP contacts are provided by residues 464–468 (DTPGH) and 518–521 (NKMD). The tract at residues 518-521 (NKMD) is G4. Positions 554-556 (SAK) are G5.

It belongs to the TRAFAC class translation factor GTPase superfamily. Classic translation factor GTPase family. IF-2 subfamily.

It is found in the cytoplasm. Its function is as follows. One of the essential components for the initiation of protein synthesis. Protects formylmethionyl-tRNA from spontaneous hydrolysis and promotes its binding to the 30S ribosomal subunits. Also involved in the hydrolysis of GTP during the formation of the 70S ribosomal complex. The polypeptide is Translation initiation factor IF-2 (Psychrobacter arcticus (strain DSM 17307 / VKM B-2377 / 273-4)).